The following is a 356-amino-acid chain: MSRYWSPVVGTLSPYVPGEQPKLPDLIKLNTNENPYGPSPKALQAIAAAAGDTLRLYPDPASDDLRGAIAAAVGVQADQVFVGNGSDEVLAHVFMALFRHGRPVRFPDISYSFYPVYCGLYEIPYQVVPLTDDFRIDPADYQPGGQAAGGIIFPNPNAPTGRALARDEVERIVTANPDTVVVVDEAYVDFGAESVAPLVDRHDNLLVVQTLSKSRSLAGLRVGFALGSRALIDGLERVKNSFNSYPIDRLASAGAQAAMQDQAYFDRTRQAVMATRERMSADLRALGFDVLPSAANFVFARHPEHDAAQLAARLRERSILVRHFRQARIDQFLRITVGTDAQCEALIGALKKIFSS.

Lys213 is modified (N6-(pyridoxal phosphate)lysine).

It belongs to the class-II pyridoxal-phosphate-dependent aminotransferase family. Histidinol-phosphate aminotransferase subfamily. Homodimer. It depends on pyridoxal 5'-phosphate as a cofactor.

It carries out the reaction L-histidinol phosphate + 2-oxoglutarate = 3-(imidazol-4-yl)-2-oxopropyl phosphate + L-glutamate. The protein operates within amino-acid biosynthesis; L-histidine biosynthesis; L-histidine from 5-phospho-alpha-D-ribose 1-diphosphate: step 7/9. The polypeptide is Histidinol-phosphate aminotransferase 1 (hisC1) (Bordetella parapertussis (strain 12822 / ATCC BAA-587 / NCTC 13253)).